Reading from the N-terminus, the 195-residue chain is Probable GTP-binding protein EngB (195 aa).

The region spanning 22–195 (GLPEIALAGR…WGAIKKMISR (174 aa)) is the EngB-type G domain. Residues 30-37 (GRSNVGKS), 57-61 (GKTQT), 75-78 (DVPG), 142-145 (TKAD), and 174-176 (FSS) contribute to the GTP site. Mg(2+) contacts are provided by Ser-37 and Thr-59.

Belongs to the TRAFAC class TrmE-Era-EngA-EngB-Septin-like GTPase superfamily. EngB GTPase family. The cofactor is Mg(2+).

Functionally, necessary for normal cell division and for the maintenance of normal septation. This Bacillus velezensis (strain DSM 23117 / BGSC 10A6 / LMG 26770 / FZB42) (Bacillus amyloliquefaciens subsp. plantarum) protein is Probable GTP-binding protein EngB.